A 267-amino-acid polypeptide reads, in one-letter code: 4-hydroxy-tetrahydrodipicolinate reductase (267 aa).

Gly-10 to Gln-15 contributes to the NAD(+) binding site. Arg-37 serves as a coordination point for NADP(+). Residues Gly-99–Thr-101 and Thr-122–Val-125 contribute to the NAD(+) site. His-154 functions as the Proton donor/acceptor in the catalytic mechanism. His-155 lines the (S)-2,3,4,5-tetrahydrodipicolinate pocket. Lys-158 acts as the Proton donor in catalysis. Gly-164–Thr-165 is a (S)-2,3,4,5-tetrahydrodipicolinate binding site.

Belongs to the DapB family.

The protein localises to the cytoplasm. The catalysed reaction is (S)-2,3,4,5-tetrahydrodipicolinate + NAD(+) + H2O = (2S,4S)-4-hydroxy-2,3,4,5-tetrahydrodipicolinate + NADH + H(+). The enzyme catalyses (S)-2,3,4,5-tetrahydrodipicolinate + NADP(+) + H2O = (2S,4S)-4-hydroxy-2,3,4,5-tetrahydrodipicolinate + NADPH + H(+). The protein operates within amino-acid biosynthesis; L-lysine biosynthesis via DAP pathway; (S)-tetrahydrodipicolinate from L-aspartate: step 4/4. Functionally, catalyzes the conversion of 4-hydroxy-tetrahydrodipicolinate (HTPA) to tetrahydrodipicolinate. The chain is 4-hydroxy-tetrahydrodipicolinate reductase from Ehrlichia chaffeensis (strain ATCC CRL-10679 / Arkansas).